The following is a 436-amino-acid chain: MTKPIVAIVGRPNVGKSTIFNRIVGERVSIVEDTPGVTRDRIYSSGEWLTHDFNIIDTGGIEIGDAPFQTQIRAQAEIAIDEAYVIIFMVNVREGLTQSDEMVAQILYKSKKPVVLAVNKVDNMEMRTDVYDFYSLGFGEPYPISGSHGLGLGDLLDAVVSHFGEEEEDPYDEDTIRLSIIGRPNVGKSSLVNAILGEDRVIVSNVAGTTRDAIDTEYSYDGQDYVLIDTAGMRKKGKVYESTEKYSVLRALKAIERSNVVLVVIDAEQGIIEQDKRVAGYAHEQGKAVVIVVNKWDTVEKDSKTMKKFEDEVRKEFQFLDYAQIAFVSAKERTRLRTLFPYINEASENHKKRVQSSTLNEVVTGAISMNPTPTDKGRRLNVFYATQVAIEPPTFVVFVNDVELMHFSYKRYLENQIRAAFGFEGTPIHIIARKRN.

2 consecutive EngA-type G domains span residues 4-167 and 176-351; these read PIVA…GEEE and IRLS…ENHK. GTP contacts are provided by residues 10–17, 57–61, 119–122, 182–189, 229–233, and 294–297; these read GRPNVGKS, DTGGI, NKVD, DTAGM, and NKWD. Residues 352–436 form the KH-like domain; sequence KRVQSSTLNE…PIHIIARKRN (85 aa).

This sequence belongs to the TRAFAC class TrmE-Era-EngA-EngB-Septin-like GTPase superfamily. EngA (Der) GTPase family. Associates with the 50S ribosomal subunit.

Functionally, GTPase that plays an essential role in the late steps of ribosome biogenesis. The sequence is that of GTPase Der from Staphylococcus aureus (strain USA300).